Reading from the N-terminus, the 198-residue chain is Peroxynitrite isomerase (198 aa).

Residues 20-26 carry the GXWXGXG motif; the sequence is GVWEGTG. H189 contributes to the heme b binding site.

Belongs to the nitrobindin family. In terms of assembly, homodimer. Requires heme b as cofactor.

The enzyme catalyses peroxynitrite = nitrate. It functions in the pathway nitrogen metabolism. Its function is as follows. Heme-binding protein able to scavenge peroxynitrite and to protect free L-tyrosine against peroxynitrite-mediated nitration, by acting as a peroxynitrite isomerase that converts peroxynitrite to nitrate. Therefore, this protein likely plays a role in peroxynitrite sensing and in the detoxification of reactive nitrogen and oxygen species (RNS and ROS, respectively). Is able to bind nitric oxide (NO) in vitro, but may act as a sensor of peroxynitrite levels in vivo. This is Peroxynitrite isomerase from Leifsonia xyli subsp. xyli (strain CTCB07).